The chain runs to 182 residues: Glycerol-3-phosphate acyltransferase 1 (182 aa).

The next 5 helical transmembrane spans lie at 5–25 (MQFLYLVASYLIGNILTAYIV), 54–74 (GYFIATFLGDAIKGAIVVAVA), 81–101 (PTFVMLTLLAVIIGHIYPVLF), 117–137 (IAFDYLIALTLLGIFIVFYLI), and 157–177 (ILYSYSIVTTILSGIIIVLIL).

The protein belongs to the PlsY family. Probably interacts with PlsX.

The protein localises to the cell membrane. It catalyses the reaction an acyl phosphate + sn-glycerol 3-phosphate = a 1-acyl-sn-glycero-3-phosphate + phosphate. It participates in lipid metabolism; phospholipid metabolism. In terms of biological role, catalyzes the transfer of an acyl group from acyl-phosphate (acyl-PO(4)) to glycerol-3-phosphate (G3P) to form lysophosphatidic acid (LPA). This enzyme utilizes acyl-phosphate as fatty acyl donor, but not acyl-CoA or acyl-ACP. This chain is Glycerol-3-phosphate acyltransferase 1, found in Bacillus cereus (strain ATCC 14579 / DSM 31 / CCUG 7414 / JCM 2152 / NBRC 15305 / NCIMB 9373 / NCTC 2599 / NRRL B-3711).